The chain runs to 144 residues: Snaclec 6 (144 aa).

An N-terminal signal peptide occupies residues 1–23 (MGRFISVSFGLLVVFLSLSGTGA). 3 cysteine pairs are disulfide-bonded: Cys-25-Cys-36, Cys-53-Cys-142, and Cys-119-Cys-134. The 112-residue stretch at 32–143 (HEGHCYKVFK…CNFIAPVVCK (112 aa)) folds into the C-type lectin domain.

The protein belongs to the snaclec family. Heterodimer; disulfide-linked.

It localises to the secreted. Its function is as follows. Interferes with one step of hemostasis (modulation of platelet aggregation, or coagulation cascade, for example). This Daboia siamensis (Eastern Russel's viper) protein is Snaclec 6.